A 506-amino-acid polypeptide reads, in one-letter code: Anaerobic nitric oxide reductase transcription regulator NorR (506 aa).

The residue at position 57 (Asp-57) is a 4-aspartylphosphate. The 230-residue stretch at 187-416 (MIGLSPAMTQ…LEHAIHRAVV (230 aa)) folds into the Sigma-54 factor interaction domain. ATP contacts are provided by residues 215–222 (GETGTGKE) and 278–287 (ADNGTLFLDE). A DNA-binding region (H-T-H motif) is located at residues 481-500 (WAASARALETDVANLHRLAK).

It participates in nitrogen metabolism; nitric oxide reduction. Its function is as follows. Required for the expression of anaerobic nitric oxide (NO) reductase, acts as a transcriptional activator for at least the norVW operon. Activation also requires sigma-54. This chain is Anaerobic nitric oxide reductase transcription regulator NorR, found in Salmonella newport (strain SL254).